We begin with the raw amino-acid sequence, 403 residues long: Vitamin D(3) 25-hydroxylase (403 aa).

Cysteine 347 serves as a coordination point for heme.

This sequence belongs to the cytochrome P450 family. Heme serves as cofactor.

Its subcellular location is the cytoplasm. The catalysed reaction is 5beta-cholestane-3alpha,7alpha,12alpha-triol + 6 reduced [adrenodoxin] + 3 O2 + 5 H(+) = (25R)-3alpha,7alpha,12alpha-trihydroxy-5beta-cholestan-26-oate + 6 oxidized [adrenodoxin] + 4 H2O. Its activity is regulated as follows. Activated by partially methylated beta-cyclodextrin. Functionally, hydroxylates vitamin D(3) into 25-hydroxyvitamin D(3) and 1-alpha,25-dihydroxyvitamin D(3), its physiologically active forms. It first hydroxylates the C-25 position of vitamin D(3) to form 25-hydroxyvitamin D(3), then subsequently hydroxylates the C-1-alpha position to form 1-alpha,25-dihydroxyvitamin D(3). Also displays 25-hydroxylase activity on vitamin D(2) and 7-dehydrocholesterol. May play a role in the biosynthesis of steroid metabolic intermediates. This is Vitamin D(3) 25-hydroxylase from Pseudonocardia autotrophica (Amycolata autotrophica).